A 460-amino-acid polypeptide reads, in one-letter code: Ribosomal protein uS12 methylthiotransferase RimO (460 aa).

In terms of domain architecture, MTTase N-terminal spans 9–119; that stretch reads PKVGFVSLGC…VMEAVHAALP (111 aa). [4Fe-4S] cluster contacts are provided by cysteine 18, cysteine 54, cysteine 83, cysteine 150, cysteine 154, and cysteine 157. Residues 136 to 374 form the Radical SAM core domain; the sequence is LTPRHYAYLK…AKQAEISALR (239 aa). A TRAM domain is found at 376-444; the sequence is EAKIGSVQQC…EHDLFGDALP (69 aa).

The protein belongs to the methylthiotransferase family. RimO subfamily. [4Fe-4S] cluster is required as a cofactor.

The protein resides in the cytoplasm. The catalysed reaction is L-aspartate(89)-[ribosomal protein uS12]-hydrogen + (sulfur carrier)-SH + AH2 + 2 S-adenosyl-L-methionine = 3-methylsulfanyl-L-aspartate(89)-[ribosomal protein uS12]-hydrogen + (sulfur carrier)-H + 5'-deoxyadenosine + L-methionine + A + S-adenosyl-L-homocysteine + 2 H(+). Its function is as follows. Catalyzes the methylthiolation of an aspartic acid residue of ribosomal protein uS12. This Xanthomonas oryzae pv. oryzae (strain PXO99A) protein is Ribosomal protein uS12 methylthiotransferase RimO.